Consider the following 247-residue polypeptide: Coproheme decarboxylase (247 aa).

Residues Arg-129, Tyr-143–Lys-147, His-170, Gln-183, and Ser-221 each bind Fe-coproporphyrin III. Tyr-143 is an active-site residue.

The protein belongs to the ChdC family. Type 1 subfamily. Requires Fe-coproporphyrin III as cofactor.

It carries out the reaction Fe-coproporphyrin III + 2 H2O2 + 2 H(+) = heme b + 2 CO2 + 4 H2O. It catalyses the reaction Fe-coproporphyrin III + H2O2 + H(+) = harderoheme III + CO2 + 2 H2O. The catalysed reaction is harderoheme III + H2O2 + H(+) = heme b + CO2 + 2 H2O. The protein operates within porphyrin-containing compound metabolism; protoheme biosynthesis. In terms of biological role, involved in coproporphyrin-dependent heme b biosynthesis. Catalyzes the decarboxylation of Fe-coproporphyrin III (coproheme) to heme b (protoheme IX), the last step of the pathway. The reaction occurs in a stepwise manner with a three-propionate intermediate. The polypeptide is Coproheme decarboxylase (Bacillus anthracis).